We begin with the raw amino-acid sequence, 503 residues long: ATP synthase subunit alpha (503 aa).

An ATP-binding site is contributed by 169 to 176 (GDRKTGKT).

The protein belongs to the ATPase alpha/beta chains family. F-type ATPases have 2 components, CF(1) - the catalytic core - and CF(0) - the membrane proton channel. CF(1) has five subunits: alpha(3), beta(3), gamma(1), delta(1), epsilon(1). CF(0) has three main subunits: a(1), b(2) and c(9-12). The alpha and beta chains form an alternating ring which encloses part of the gamma chain. CF(1) is attached to CF(0) by a central stalk formed by the gamma and epsilon chains, while a peripheral stalk is formed by the delta and b chains.

It is found in the cell membrane. It carries out the reaction ATP + H2O + 4 H(+)(in) = ADP + phosphate + 5 H(+)(out). In terms of biological role, produces ATP from ADP in the presence of a proton gradient across the membrane. The alpha chain is a regulatory subunit. The sequence is that of ATP synthase subunit alpha from Lactobacillus helveticus (strain DPC 4571).